Consider the following 200-residue polypeptide: Eukaryotic translation initiation factor isoform 4E (200 aa).

MRNA is bound by residues 44 to 49 (QGVAWG), Lys76, and 94 to 95 (WE). A disulfide bridge connects residues Cys99 and Cys138. MRNA contacts are provided by residues 145–150 (RRSQDK) and 189–192 (KRER).

The protein belongs to the eukaryotic initiation factor 4E family. As to quaternary structure, EIF4F is a multi-subunit complex, the composition of which varies with external and internal environmental conditions. It is composed of at least EIF4A, EIF4E and EIF4G. EIF4E is also known to interact with other partners. In higher plants two isoforms of EIF4F have been identified, named isoform EIF4F and isoform EIF(iso)4F. Isoform EIF4F has subunits p220 and p26, whereas isoform EIF(iso)4F has subunits p82 and p28. (Microbial infection) Interacts with viral genome-linked protein (VPg); this interaction is possible in susceptible hosts but impaired in resistant plants. According to the redox status, the Cys-99-Cys-138 disulfide bridge may have a role in regulating protein function by affecting its ability to bind capped mRNA. In terms of tissue distribution, mostly expressed in roots and leaves, and, to a lower extent, in stems, flowers and immature green fruits.

Its subcellular location is the cytoplasm. It localises to the nucleus. Functionally, component of the protein complex eIF4F, which is involved in the recognition of the mRNA cap, ATP-dependent unwinding of 5'-terminal secondary structure and recruitment of mRNA to the ribosome. Recognizes and binds the 7-methylguanosine-containing mRNA cap during an early step in the initiation of protein synthesis and facilitates ribosome binding by inducing the unwinding of the mRNAs secondary structures. Key component of recessive resistance to potyviruses. (Microbial infection) Susceptibility host factor required for viral infection by recruiting viral RNAs to the host ribosomal complex via an interaction with viral genome-linked protein (VPg). This is Eukaryotic translation initiation factor isoform 4E from Solanum lycopersicum (Tomato).